A 192-amino-acid chain; its full sequence is Virion infectivity factor (192 aa).

The tract at residues 14–17 (DRMR) is interaction with host APOBEC3F; F1-box. The segment at 40-44 (YRHHF) is interaction with host APOBEC3G; G-box. The interval 54 to 72 (EVHIPLETAELVITTYWGL) is interaction with host APOBEC3F and APOBEC3G; FG-box. Positions 74–79 (PGEREW) are interaction with host APOBEC3F; F2-box. Residues 75–114 (GEREWHLGQGVSIEWRQGRYRTQIDPGLADQLIHIYYFDC) form an RNA-binding region. At Thr96 the chain carries Phosphothreonine; by host MAP4K1. His108, Cys114, Cys133, and His139 together coordinate Zn(2+). Positions 108 to 139 (HIYYFDCFSESAIRKAILGHKISPRCNYQAGH) match the HCCH motif motif. Ser144 carries the post-translational modification Phosphoserine; by host. Positions 144–153 (SLQYLALTAL) match the BC-box-like motif motif. The multimerization stretch occupies residues 151-164 (TALIAPKKTKPPLP). The interval 151 to 180 (TALIAPKKTKPPLPSVQKLVEDRWNKPQKT) is SOCS box-like. Residues 164-192 (PSVQKLVEDRWNKPQKTRGHRESHTMNGH) are disordered. Ser165 is subject to Phosphoserine; by host MAP4K1. A membrane association region spans residues 171–172 (ED). The segment covering 183–192 (HRESHTMNGH) has biased composition (basic and acidic residues). Thr188 carries the post-translational modification Phosphothreonine; by host.

It belongs to the primate lentivirus group Vif protein family. Homomultimer; in vitro and presumably in vivo. Interacts with viral RNA and Pr55Gag precursor; these interactions mediate Vif incorporation into the virion. Interacts with the viral reverse transcriptase. Forms cullin-5-RING E3 ubiquitin-protein ligase complex (ECS complex) by interacting with host CUL5, RBX2, elongin BC complex (ELOB and ELOC) and CBFB/CBF-beta. Within the ECS complex, Vif interacts directly with host CUL5, ELOC and APOBEC (APOBEC3F and APOBEC3G) substrates. The ECS complex also contains some single-stranded RNA (ssRNA) that acts as a glue that bridges Vif with APOBEC (APOBEC3F and APOBEC3G) substrates. Interacts with host UBCE7IP1 isoform 3/ZIN and possibly with SAT. Interacts with host tyrosine kinases HCK and FYN; these interactions may decrease level of phosphorylated APOBEC3G incorporation into virions. Interacts with host ABCE1; this interaction may play a role in protecting viral RNA from damage during viral assembly. Interacts with host MDM2; this interaction targets Vif for degradation by the proteasome. In terms of processing, processed in virion by the viral protease. Post-translationally, highly phosphorylated on serine and threonine residues. Polyubiquitinated and degraded by the proteasome in the presence of APOBEC3G.

It localises to the host cytoplasm. The protein resides in the host cell membrane. It is found in the virion. In terms of biological role, counteracts the innate antiviral activity of host APOBEC3F and APOBEC3G by promoting their ubiquitination and degradation. Acts as a substrate recognition component of an E3 ubiquitin-protein ligase complex: mechanistically, Vif hijacks a host cullin-5-RING E3 ubiquitin-protein ligase complex (ECS complex) and the transcription coactivator CBFB/CBF-beta to form an active E3 ubiquitin-protein ligase complex that targets APOBEC3G and APOBEC3F for polyubiquitination, leading to their degradation by the proteasome. Vif interaction with APOBEC3G also blocks its cytidine deaminase activity in a proteasome-independent manner, suggesting a dual inhibitory mechanism. May interact directly with APOBEC3G mRNA in order to inhibit its translation. Association with CBFB/CBF-beta also inhibits the transcription coactivator activity of CBFB/CBF-beta. Seems to play a role in viral morphology by affecting the stability of the viral nucleoprotein core. Finally, Vif also contributes to the G2 cell cycle arrest observed in HIV infected cells. The protein is Virion infectivity factor of Homo sapiens (Human).